A 241-amino-acid chain; its full sequence is Tumor necrosis factor receptor superfamily member 18 (241 aa).

An N-terminal signal peptide occupies residues 1–25; it reads MAQHGAMGAFRALCGLALLCALSLG. Over 26–162 the chain is Extracellular; the sequence is QRPTGGPGCG…CVPGSPPAEP (137 aa). Intrachain disulfides connect cysteine 34–cysteine 49, cysteine 74–cysteine 86, cysteine 81–cysteine 94, cysteine 115–cysteine 134, and cysteine 128–cysteine 153. TNFR-Cys repeat units lie at residues 34–72, 74–112, and 115–153; these read CGPG…EWDC, CVQP…GFQC, and CASG…NAVC. Asparagine 146 carries N-linked (GlcNAc...) asparagine glycosylation. The chain crosses the membrane as a helical span at residues 163-183; it reads LGWLTVVLLAVAACVLLLTSA. Topologically, residues 184-241 are cytoplasmic; it reads QLGLHIWQLRSQCMWPRETQLLLEVPPSTEDARSCQFPEEERGERSAEEKGRLGDLWV. Residues 214-241 form a disordered region; sequence DARSCQFPEEERGERSAEEKGRLGDLWV. Residues 222–241 are compositionally biased toward basic and acidic residues; it reads EEERGERSAEEKGRLGDLWV.

In terms of assembly, binds to TRAF1, TRAF2, and TRAF3, but not TRAF5 and TRAF6. Binds through its C-terminus to SIVA1/SIVA. In terms of tissue distribution, expressed in lymph node, peripheral blood leukocytes and weakly in spleen.

It localises to the cell membrane. Its subcellular location is the secreted. Its function is as follows. Receptor for TNFSF18. Seems to be involved in interactions between activated T-lymphocytes and endothelial cells and in the regulation of T-cell receptor-mediated cell death. Mediated NF-kappa-B activation via the TRAF2/NIK pathway. This Homo sapiens (Human) protein is Tumor necrosis factor receptor superfamily member 18 (TNFRSF18).